The following is a 174-amino-acid chain: Mediator of RNA polymerase II transcription subunit 30 (174 aa).

Residues 113 to 166 (VEDDSSKLEDRMANQLRAASEERREVLEVNKKLKQKNQQLKMIMDQLRNLIWEI) adopt a coiled-coil conformation.

The protein belongs to the Mediator complex subunit 30 family. In terms of assembly, component of the Mediator complex.

It is found in the nucleus. Its function is as follows. Component of the Mediator complex, a coactivator involved in the regulated transcription of nearly all RNA polymerase II-dependent genes. Mediator functions as a bridge to convey information from gene-specific regulatory proteins to the basal RNA polymerase II transcription machinery. Mediator is recruited to promoters by direct interactions with regulatory proteins and serves as a scaffold for the assembly of a functional preinitiation complex with RNA polymerase II and the general transcription factors. In Danio rerio (Zebrafish), this protein is Mediator of RNA polymerase II transcription subunit 30 (med30).